Here is a 345-residue protein sequence, read N- to C-terminus: Phosphoribosylformylglycinamidine cyclo-ligase (345 aa).

The protein belongs to the AIR synthase family.

Its subcellular location is the cytoplasm. It carries out the reaction 2-formamido-N(1)-(5-O-phospho-beta-D-ribosyl)acetamidine + ATP = 5-amino-1-(5-phospho-beta-D-ribosyl)imidazole + ADP + phosphate + H(+). It functions in the pathway purine metabolism; IMP biosynthesis via de novo pathway; 5-amino-1-(5-phospho-D-ribosyl)imidazole from N(2)-formyl-N(1)-(5-phospho-D-ribosyl)glycinamide: step 2/2. This is Phosphoribosylformylglycinamidine cyclo-ligase from Prochlorococcus marinus (strain MIT 9211).